Reading from the N-terminus, the 272-residue chain is Ribonuclease HII (272 aa).

The RNase H type-2 domain occupies 87 to 272 (KYVAGVDEVG…HRMSFLKNIL (186 aa)). 3 residues coordinate a divalent metal cation: D93, E94, and D188.

Belongs to the RNase HII family. It depends on Mn(2+) as a cofactor. Mg(2+) is required as a cofactor.

The protein localises to the cytoplasm. The catalysed reaction is Endonucleolytic cleavage to 5'-phosphomonoester.. Its function is as follows. Endonuclease that specifically degrades the RNA of RNA-DNA hybrids. This chain is Ribonuclease HII, found in Clostridium perfringens (strain SM101 / Type A).